Here is a 272-residue protein sequence, read N- to C-terminus: MMACHC-like protein (272 aa).

Substrate-binding positions include aspartate 121, 132 to 135, and 146 to 148; these read ILMQ and YYQ.

Belongs to the MMACHC family. FAD serves as cofactor. It depends on FMN as a cofactor.

Its subcellular location is the cytoplasm. Its function is as follows. Catalyzes the reductive dealkylation of cyanocobalamin to cob(II)alamin, using FAD or FMN as cofactor and NADPH as cosubstrate. Can also catalyze the glutathione-dependent reductive demethylation of methylcobalamin, and, with much lower efficiency, the glutathione-dependent reductive demethylation of adenosylcobalamin. Under anaerobic conditions cob(I)alamin is the first product; it is highly reactive and is converted to aquocob(II)alamin in the presence of oxygen. Binds cyanocobalamin, adenosylcobalamin, methylcobalamin and other, related vitamin B12 derivatives. This is MMACHC-like protein (cblc-1) from Caenorhabditis elegans.